The chain runs to 417 residues: Serine hydroxymethyltransferase (417 aa).

Residues Leu121 and 125–127 (GHL) each bind (6S)-5,6,7,8-tetrahydrofolate. Lys229 is subject to N6-(pyridoxal phosphate)lysine. 355–357 (SPF) provides a ligand contact to (6S)-5,6,7,8-tetrahydrofolate.

The protein belongs to the SHMT family. Homodimer. Pyridoxal 5'-phosphate serves as cofactor.

The protein resides in the cytoplasm. The catalysed reaction is (6R)-5,10-methylene-5,6,7,8-tetrahydrofolate + glycine + H2O = (6S)-5,6,7,8-tetrahydrofolate + L-serine. The protein operates within one-carbon metabolism; tetrahydrofolate interconversion. It functions in the pathway amino-acid biosynthesis; glycine biosynthesis; glycine from L-serine: step 1/1. Functionally, catalyzes the reversible interconversion of serine and glycine with tetrahydrofolate (THF) serving as the one-carbon carrier. This reaction serves as the major source of one-carbon groups required for the biosynthesis of purines, thymidylate, methionine, and other important biomolecules. Also exhibits THF-independent aldolase activity toward beta-hydroxyamino acids, producing glycine and aldehydes, via a retro-aldol mechanism. The chain is Serine hydroxymethyltransferase from Xanthomonas axonopodis pv. citri (strain 306).